We begin with the raw amino-acid sequence, 381 residues long: Sulfate adenylyltransferase (381 aa).

The protein belongs to the sulfate adenylyltransferase family.

It carries out the reaction sulfate + ATP + H(+) = adenosine 5'-phosphosulfate + diphosphate. It functions in the pathway sulfur metabolism; hydrogen sulfide biosynthesis; sulfite from sulfate: step 1/3. This Chloroflexus aurantiacus (strain ATCC 29366 / DSM 635 / J-10-fl) protein is Sulfate adenylyltransferase.